The following is a 289-amino-acid chain: tRNA pseudouridine synthase B (289 aa).

Asp38 serves as the catalytic Nucleophile.

It belongs to the pseudouridine synthase TruB family. Type 1 subfamily.

The enzyme catalyses uridine(55) in tRNA = pseudouridine(55) in tRNA. Functionally, responsible for synthesis of pseudouridine from uracil-55 in the psi GC loop of transfer RNAs. This Acaryochloris marina (strain MBIC 11017) protein is tRNA pseudouridine synthase B.